The primary structure comprises 88 residues: RNA-binding protein Hfq (88 aa).

The Sm domain maps to 9-68 (DPFLNALRRERIPVSIYLVNGIKLQGQIESFDQFVILLKNTVNQMVYKHAISTVVPARAV). The tract at residues 66-88 (RAVSHHSGEQQRAPSDRPEKTED) is disordered. The span at 71 to 88 (HSGEQQRAPSDRPEKTED) shows a compositional bias: basic and acidic residues.

Belongs to the Hfq family. Homohexamer.

In terms of biological role, RNA chaperone that binds small regulatory RNA (sRNAs) and mRNAs to facilitate mRNA translational regulation in response to envelope stress, environmental stress and changes in metabolite concentrations. Also binds with high specificity to tRNAs. This chain is RNA-binding protein Hfq, found in Vibrio atlanticus (strain LGP32) (Vibrio splendidus (strain Mel32)).